A 301-amino-acid chain; its full sequence is Probable alpha-L-glutamate ligase (301 aa).

The ATP-grasp domain maps to 104–287 (HQLLAAQGID…VAIKIVHHVE (184 aa)). ATP is bound by residues K141, 178 to 179 (EF), D187, and 211 to 213 (RSN). Residues D248, E260, and N262 each coordinate Mg(2+). Positions 248, 260, and 262 each coordinate Mn(2+).

This sequence belongs to the RimK family. Requires Mg(2+) as cofactor. The cofactor is Mn(2+).

This is Probable alpha-L-glutamate ligase from Xylella fastidiosa (strain M12).